We begin with the raw amino-acid sequence, 334 residues long: B3 domain-containing protein LOC_Os12g40090 (334 aa).

The segment at residues 5–102 is a DNA-binding region (TF-B3 1); sequence RIRFFRLMTG…SFDVLIFDAS (98 aa). The interval 142-178 is disordered; the sequence is TSTPSVLIGSPHKASTSKKLSGKTKTNPRKEPEDPNC. The segment covering 154–166 has biased composition (low complexity); the sequence is KASTSKKLSGKTK. The TF-B3 2 DNA-binding region spans 227-326; that stretch reads FVVVLQTAHV…TMTVHVIGKA (100 aa).

Its subcellular location is the nucleus. In Oryza sativa subsp. japonica (Rice), this protein is B3 domain-containing protein LOC_Os12g40090.